The primary structure comprises 307 residues: Ornithine carbamoyltransferase (307 aa).

Carbamoyl phosphate-binding positions include 55-58 (STRT), Q82, R106, and 133-136 (HPCQ). Residues N164, D224, and 228 to 229 (SM) contribute to the L-ornithine site. Carbamoyl phosphate-binding positions include 263–264 (CL) and R291.

This sequence belongs to the aspartate/ornithine carbamoyltransferase superfamily. OTCase family.

The protein localises to the cytoplasm. It catalyses the reaction carbamoyl phosphate + L-ornithine = L-citrulline + phosphate + H(+). Its pathway is amino-acid biosynthesis; L-arginine biosynthesis; L-arginine from L-ornithine and carbamoyl phosphate: step 1/3. Reversibly catalyzes the transfer of the carbamoyl group from carbamoyl phosphate (CP) to the N(epsilon) atom of ornithine (ORN) to produce L-citrulline. The polypeptide is Ornithine carbamoyltransferase (Bradyrhizobium diazoefficiens (strain JCM 10833 / BCRC 13528 / IAM 13628 / NBRC 14792 / USDA 110)).